We begin with the raw amino-acid sequence, 348 residues long: Peptide-N(4)-(N-acetyl-beta-glucosaminyl)asparagine amidase (348 aa).

Zn(2+)-binding residues include cysteine 116, cysteine 119, cysteine 151, and cysteine 154. Cysteine 177 (nucleophile) is an active-site residue. Active-site residues include histidine 204 and aspartate 221. Glutamate 224 lines the substrate pocket. The tract at residues 311 to 348 is disordered; it reads PSATPTKEMQKLKISKTGNKGRISGSAEWKESRGENGK. The span at 338–348 shows a compositional bias: basic and acidic residues; that stretch reads EWKESRGENGK.

This sequence belongs to the transglutaminase-like superfamily. PNGase family. Zn(2+) serves as cofactor.

The protein localises to the cytoplasm. It carries out the reaction Hydrolysis of an N(4)-(acetyl-beta-D-glucosaminyl)asparagine residue in which the glucosamine residue may be further glycosylated, to yield a (substituted) N-acetyl-beta-D-glucosaminylamine and a peptide containing an aspartate residue.. In terms of biological role, specifically deglycosylates the denatured form of N-linked glycoproteins in the cytoplasm and assists their proteasome-mediated degradation. Cleaves the beta-aspartyl-glucosamine (GlcNAc) of the glycan and the amide side chain of Asn, converting Asn to Asp. Prefers proteins containing high-mannose over those bearing complex type oligosaccharides. Can recognize misfolded proteins in the endoplasmic reticulum that are exported to the cytosol to be destroyed and deglycosylate them, while it has no activity toward native proteins. Deglycosylation is a prerequisite for subsequent proteasome-mediated degradation of some, but not all, misfolded glycoproteins. This is Peptide-N(4)-(N-acetyl-beta-glucosaminyl)asparagine amidase (PNG1) from Candida glabrata (strain ATCC 2001 / BCRC 20586 / JCM 3761 / NBRC 0622 / NRRL Y-65 / CBS 138) (Yeast).